The sequence spans 530 residues: Glucose-6-phosphate isomerase (530 aa).

E356 functions as the Proton donor in the catalytic mechanism. Active-site residues include H387 and K502.

The protein belongs to the GPI family.

It localises to the cytoplasm. The catalysed reaction is alpha-D-glucose 6-phosphate = beta-D-fructose 6-phosphate. It participates in carbohydrate biosynthesis; gluconeogenesis. The protein operates within carbohydrate degradation; glycolysis; D-glyceraldehyde 3-phosphate and glycerone phosphate from D-glucose: step 2/4. Its function is as follows. Catalyzes the reversible isomerization of glucose-6-phosphate to fructose-6-phosphate. This chain is Glucose-6-phosphate isomerase, found in Borrelia garinii subsp. bavariensis (strain ATCC BAA-2496 / DSM 23469 / PBi) (Borreliella bavariensis).